The chain runs to 558 residues: MDIKRTVLWVIFFMSAVMLFDNWQRSHGRPSMFFPNVTQTNTASNATNGNGASGASAAAAANALPAAATGAAPATTAPAAQAQLVRFSTDVYNGEIDTRGGTLAKLTLTKAGDGKQPDLSVTLFDHTANHTYLARTGLLGGDFPNHNDVYAQVAGPTSLAADQNTLKLSFESPVKGGVKVVKTYTFTRGSYVIGVDTKIENVGAAPVTPSVYMELVRDNSSVETPMFSHTFLGPAVYTDQKHFQKITFGDIDKNKADYVTSADNGWIAMVQHYFASAWIPQSGAKRDIYVEKIDPTLYRVGVKQPVEAIAPGQSADVSARLFAGPEEERMLEGIAPGLELVKDYGWVTIIAKPLFWLLEKIHGFVGNWGWAIVLLTLLIKAVFFPLSAASYKSMARMKEITPRMQALRERFKSDPQKMNAALMELYKTEKVNPFGGCLPVVIQIPVFISLYWVLLASVEMRGAPWVLWIHDLSQRDPYFILPVLMAVSMFVQTKLNPTPPDPVQAKMMMFMPIAFSVMFFFFPAGLVLYYVVNNVLSIAQQYYITRTLGGAAAKKKAS.

Transmembrane regions (helical) follow at residues 3 to 23 (IKRT…FDNW), 364 to 384 (FVGN…AVFF), 438 to 458 (LPVV…LASV), 477 to 497 (PYFI…KLNP), and 508 to 528 (MMFM…GLVL).

The protein belongs to the OXA1/ALB3/YidC family. Type 1 subfamily. As to quaternary structure, interacts with the Sec translocase complex via SecD. Specifically interacts with transmembrane segments of nascent integral membrane proteins during membrane integration.

The protein localises to the cell inner membrane. Required for the insertion and/or proper folding and/or complex formation of integral membrane proteins into the membrane. Involved in integration of membrane proteins that insert both dependently and independently of the Sec translocase complex, as well as at least some lipoproteins. Aids folding of multispanning membrane proteins. The sequence is that of Membrane protein insertase YidC from Burkholderia mallei (strain NCTC 10247).